We begin with the raw amino-acid sequence, 105 residues long: Large ribosomal subunit protein uL24 (105 aa).

This sequence belongs to the universal ribosomal protein uL24 family. In terms of assembly, part of the 50S ribosomal subunit.

Its function is as follows. One of two assembly initiator proteins, it binds directly to the 5'-end of the 23S rRNA, where it nucleates assembly of the 50S subunit. In terms of biological role, one of the proteins that surrounds the polypeptide exit tunnel on the outside of the subunit. The polypeptide is Large ribosomal subunit protein uL24 (Rhizorhabdus wittichii (strain DSM 6014 / CCUG 31198 / JCM 15750 / NBRC 105917 / EY 4224 / RW1) (Sphingomonas wittichii)).